The chain runs to 727 residues: Malate synthase G (727 aa).

Acetyl-CoA is bound by residues valine 117, arginine 124 to tyrosine 125, serine 275, and arginine 312. Arginine 339 serves as the catalytic Proton acceptor. Residues arginine 339, glutamate 431, and glycine 456–aspartate 459 contribute to the glyoxylate site. Mg(2+) contacts are provided by glutamate 431 and aspartate 459. Proline 540 is a binding site for acetyl-CoA. Cysteine 616 is subject to Cysteine sulfenic acid (-SOH). The active-site Proton donor is aspartate 630.

The protein belongs to the malate synthase family. GlcB subfamily. Monomer. Mg(2+) serves as cofactor.

Its subcellular location is the cytoplasm. The enzyme catalyses glyoxylate + acetyl-CoA + H2O = (S)-malate + CoA + H(+). It participates in carbohydrate metabolism; glyoxylate cycle; (S)-malate from isocitrate: step 2/2. Functionally, involved in the glycolate utilization. Catalyzes the condensation and subsequent hydrolysis of acetyl-coenzyme A (acetyl-CoA) and glyoxylate to form malate and CoA. This Halalkalibacterium halodurans (strain ATCC BAA-125 / DSM 18197 / FERM 7344 / JCM 9153 / C-125) (Bacillus halodurans) protein is Malate synthase G.